We begin with the raw amino-acid sequence, 452 residues long: Probable glycine dehydrogenase (decarboxylating) subunit 1 (452 aa).

Belongs to the GcvP family. N-terminal subunit subfamily. As to quaternary structure, the glycine cleavage system is composed of four proteins: P, T, L and H. In this organism, the P 'protein' is a heterodimer of two subunits.

The enzyme catalyses N(6)-[(R)-lipoyl]-L-lysyl-[glycine-cleavage complex H protein] + glycine + H(+) = N(6)-[(R)-S(8)-aminomethyldihydrolipoyl]-L-lysyl-[glycine-cleavage complex H protein] + CO2. The glycine cleavage system catalyzes the degradation of glycine. The P protein binds the alpha-amino group of glycine through its pyridoxal phosphate cofactor; CO(2) is released and the remaining methylamine moiety is then transferred to the lipoamide cofactor of the H protein. This Sphingopyxis alaskensis (strain DSM 13593 / LMG 18877 / RB2256) (Sphingomonas alaskensis) protein is Probable glycine dehydrogenase (decarboxylating) subunit 1.